A 327-amino-acid chain; its full sequence is UPF0065 protein in gbd 5'region (327 aa).

A signal peptide (tat-type signal) is located at residues 1–30; it reads MQRRHFIARAGIAAATAALGLAAMPAQAQA.

Belongs to the UPF0065 (bug) family. Predicted to be exported by the Tat system. The position of the signal peptide cleavage has not been experimentally proven.

The protein resides in the periplasm. The protein is UPF0065 protein in gbd 5'region of Cupriavidus necator (Alcaligenes eutrophus).